Reading from the N-terminus, the 592-residue chain is MWRTRWEDGAPTFTRNDEFLYCHTRYETFLRVMGDFQGIFECQYSADVLRDWVRNHVDQVLSLGIPHNWFLQVRPGSTMPELRDQLLDDVICCPERLIVLGKCVIMVEDHYEETELVLCMGGGTRLYIYEPSQEILLLCARHLDELARYGMMYTEAVYRQPQTPFATRVPHDVVAMLLRHGHDADALAACVGEHHGRDVNFHTPGRHAKTLKLLTSFGCLTDCWPFEVAPAARLAECEMYVTLQLRCRWYLLGAVGSYRAGGFFDTSFLIIFDRFCRFYVVIVKSHLDRSPPLQRLAGEIYRLADSLEELFRAGLMKVYVRRRYEHGLRRAARLERNGGCVHMGEAARLHFTMFDSGVDRDYARQFRWLCRGDRFRAEMLNNWDGWDAFTIWQARVVRGDFAERRRPRSLGDGEEEDEGNDGRAMPVVRRRPPPMPRDDDEDNHVVPDNQNLEVIHDALADDEEQGEDDDDSGAEPMEPEENNVVPNVERRGGEDAVAARMAAGHESDDDEWEDLGFDLEEDTVFDLKDVDEWFEQRRLAEKERWHLGQRIVNAYRTEAEVSEAEVEARRINLNTDLSPEWVKSFDFREHFV.

Positions 407 to 491 (PRSLGDGEEE…NNVVPNVERR (85 aa)) are disordered. Positions 460-481 (ADDEEQGEDDDDSGAEPMEPEE) are enriched in acidic residues.

Belongs to the herpesviridae US22 family.

Its subcellular location is the virion tegument. The polypeptide is Tegument protein US23 (US23) (Homo sapiens (Human)).